Consider the following 2731-residue polypeptide: Teneurin-m (2731 aa).

2 disordered regions span residues 1 to 60 (MNPY…QNQQ) and 103 to 136 (LLEGVTPTAPPDVPPRNPTMSRMQNGRLTVNNPN). The Cytoplasmic segment spans residues 1-229 (MNPYEYESTL…RKDLVARCSS (229 aa)). The span at 110–119 (TAPPDVPPRN) shows a compositional bias: pro residues. A compositionally biased stretch (polar residues) spans 120–136 (PTMSRMQNGRLTVNNPN). The helical transmembrane segment at 230 to 250 (PWFGIGSISVLFAFVVMLILL) threads the bilayer. Over 251 to 2731 (TTTGVIKWNQ…RQLKFGELSA (2481 aa)) the chain is Extracellular. The segment at 321-387 (SSAATVTTAT…RTFPARSFPP (67 aa)) is disordered. Residues 322-370 (SAATVTTATSNSGTAQGLQSTSASAEATSSAATSSSQSSLTPSLSSSLA) are compositionally biased toward low complexity. EGF-like domains lie at 536 to 572 (GGDDCSESVCPVLCSQHGEYTNGECICNPGWKGKECS), 574 to 606 (RHDECEVADCSGHGHCVSGKCQCMRGYKGKFCE), 643 to 676 (DALQCLPDCSGHGTFDLDTQTCTCEAKWSGDDCS), and 738 to 774 (TIEGCPNSCAGHGQCRVSGEGQWECRCYEGWDGPDCG). Intrachain disulfides connect cysteine 540-cysteine 549, cysteine 545-cysteine 560, cysteine 562-cysteine 571, cysteine 578-cysteine 589, cysteine 583-cysteine 594, cysteine 596-cysteine 605, cysteine 651-cysteine 664, cysteine 666-cysteine 675, cysteine 742-cysteine 752, cysteine 746-cysteine 762, and cysteine 764-cysteine 773. The N-linked (GlcNAc...) asparagine glycan is linked to asparagine 857. NHL repeat units lie at residues 1160-1201 (ECPD…IMTD), 1202-1246 (GSIR…VRDT), 1391-1434 (STAY…VRVI), and 1459-1502 (CFEA…VMSS). One copy of the YD repeat lies at 1618-1652 (TGLLRTKLDSTGRSYVYNYDEFGRLTSAVTPTGRV). The tract at residues 2691–2731 (LADDPGNVAFQRDAKRKRRKTGSSHRSASNRRQLKFGELSA) is disordered. Residues 2704–2724 (AKRKRRKTGSSHRSASNRRQL) are compositionally biased toward basic residues.

It belongs to the tenascin family. Teneurin subfamily. Homodimer. Heterodimer with Ten-a. Interacts with Ten-a; the interaction occurs at the neuromuscular junction. Interacts with alpha-Spec and cher. Post-translationally, phosphorylated. Phosphorylation occurs at tyrosine residues. Proteolytically cleaved. In terms of tissue distribution, expressed in muscles and motor neurons (at protein level).

Its subcellular location is the cytoplasm. It is found in the postsynaptic cell membrane. The protein resides in the synapse. The protein localises to the synaptosome. It localises to the membrane. In terms of biological role, involved in neural development, regulating the establishment of proper connectivity within the nervous system. Acts as a homophilic and heterophilic synaptic cell adhesion molecule that drives synapse assembly. Promotes bi-directional trans-synaptic signaling with Ten-a to organize neuromuscular synapses. Functions in olfactory synaptic partner matching by promoting homophilic cell adhesion between pre-synaptic olfactory receptor neurons (ORN) axons and post-synaptic projection neurons (PN) dendrites partner in the developing antennal lobe to form stable connections. Also required for peripheral axon growth cone guidance and target recognition of motor neurons. The sequence is that of Teneurin-m (Ten-m) from Drosophila melanogaster (Fruit fly).